A 284-amino-acid chain; its full sequence is Circadian clock oscillator protein KaiA (284 aa).

The psR domain, binds oxidized quinones stretch occupies residues 1 to 135; that stretch reads MLSQIAICIW…LRLAPVETMA (135 aa). The KaiA N-terminal domain occupies 1 to 164; it reads MLSQIAICIW…DLAQRLQERL (164 aa). Positions 165-173 are flexible linker; that stretch reads GYLGVYYKR. In terms of domain architecture, KaiA C-terminal spans 174–282; the sequence is DPDRFLRNLP…CEMYRRSIPR (109 aa).

The protein belongs to the KaiA family. Homodimer. The KaiABC complex composition changes during the circadian cycle to control KaiC phosphorylation. Complexes KaiC(6), KaiA(2-4):KaiC(6), KaiB(6):KaiC(6) and KaiC(6):KaiB(6):KaiA(12) are among the most important forms, many form cooperatively. The KaiA:KaiB complex is only found at 20-24 hours in the circadian cycle (subjective night). Binds to the C-terminal A-loop of KaiC via a coiled-coil structure. KaiA and CikA compete for binding to KaiB(fs). CikA copurifies with this protein in the clock complex. Interacts with LdpA.

Its activity is regulated as follows. Binding of oxidized quinones (produced as darkness falls) prevents KaiA from stimulating KaiC autophosphorylation. In terms of biological role, key component of the KaiABC oscillator complex, which constitutes the main circadian regulator in cyanobacteria. Complex composition changes during the circadian cycle to control KaiC phosphorylation. KaiA stimulates KaiC autophosphorylation, while KaiB sequesters KaiA, leading to KaiC autodephosphorylation. KaiA binding to the KaiC CII domain during the subjective day yields KaiA(2-4):KaiC(6) complexes which stimulate KaiC autophosphorylation. A KaiA dimer is sufficient to enhance KaiC hexamer phosphorylation. Phospho-Ser-431 KaiC accumulation triggers binding of KaiB during the subjective night to form the KaiB(6):KaiC(6) complex, leading to changes in the output regulators CikA and SasA. KaiB(6):KaiC(6) formation exposes a site for KaiA binding on KaiB that sequesters KaiA from KaiC's CII domain, making the KaiC(6):KaiB(6):KaiA(12) complex resulting in KaiC autodephosphorylation. Complete dephosphorylation of KaiC leads to dissociation of KaiA(2):KaiB(1), completing 1 cycle of the Kai oscillator. Functionally, circadian oscillations can be generated in vitro by incubating KaiA, KaiB and KaiC with 1 mM ATP. The cycle is self-sustainable for at least 3 cycles and resistant to temperature changes. A very robust clock is reconstituted with KaiA, KaiB, KaiC, SasA, CikA and RpaA; output is measured by transcription from an appropriate reporter. Its function is as follows. KaiA binds oxidized quinones via its N-terminal PsR domain and is able to sense redox signals directly; quinone analog DBMIB (2,5-dibromo-3-methyl-6-isopropyl-p-benzoquinone) blocks KaiA stimulation of KaiC phosphorylation. The homodimer binds up to 8 quinones in the crystal structure, 3 in the PsR domain and 1 via the C-terminal helical bundle. Binding of oxidized quinone to the KaiA C-terminal domain reduces the phosphorylation of KaiC slightly; quinones may interact in a complex manner with KaiA to mediate clock input. This chain is Circadian clock oscillator protein KaiA, found in Synechococcus elongatus (strain ATCC 33912 / PCC 7942 / FACHB-805) (Anacystis nidulans R2).